We begin with the raw amino-acid sequence, 129 residues long: Follitropin subunit beta (129 aa).

A signal peptide spans Met-1–Cys-18. Cystine bridges form between Cys-21–Cys-69, Cys-35–Cys-84, Cys-38–Cys-122, Cys-46–Cys-100, Cys-50–Cys-102, and Cys-105–Cys-112. Asn-25 and Asn-42 each carry an N-linked (GlcNAc...) asparagine glycan.

It belongs to the glycoprotein hormones subunit beta family. In terms of assembly, heterodimer. The active follitropin is a heterodimer composed of an alpha chain/CGA shared with other hormones and a unique beta chain/FSHB shown here.

The protein localises to the secreted. Together with the alpha chain CGA constitutes follitropin, the follicle-stimulating hormone, and provides its biological specificity to the hormone heterodimer. Binds FSHR, a G protein-coupled receptor, on target cells to activate downstream signaling pathways. Follitropin is involved in follicle development and spermatogenesis in reproductive organs. This is Follitropin subunit beta (FSHB) from Cervus nippon (Sika deer).